The primary structure comprises 628 residues: Basal cell adhesion molecule (628 aa).

An N-terminal signal peptide occupies residues 1–31; sequence MEPPDARAGARRAPRLLVLALLLAAPPGSKA. Ig-like V-type domains lie at 32–142 and 150–253; these read EVRL…ARLK and PEVS…RLDG. At 32–547 the chain is on the extracellular side; sequence EVRLSVPPLV…GTVAPQTSQA (516 aa). Cystine bridges form between Cys-53-Cys-125, Cys-172-Cys-237, and Cys-291-Cys-337. Ig-like C2-type domains are found at residues 254-355, 355-441, and 448-538; these read PSFS…KTLE, ELRV…RSFR, and PELK…FHFG. N-linked (GlcNAc...) asparagine glycans are attached at residues Asn-321, Asn-330, and Asn-378. Disulfide bonds link Cys-384/Cys-424 and Cys-473/Cys-522. The chain crosses the membrane as a helical span at residues 548–568; the sequence is GVAVMAVAISVALLLLVVAVF. Residues 569-628 lie on the Cytoplasmic side of the membrane; sequence YCMRRKGRPGCCQWGEKGSPPPGEPKLSHSGSQRPEQTGLLMGSASGGAKHGSGGFGDEC. The disordered stretch occupies residues 580–628; it reads CQWGEKGSPPPGEPKLSHSGSQRPEQTGLLMGSASGGAKHGSGGFGDEC. Residues Ser-596, Ser-598, Ser-600, and Ser-621 each carry the phosphoserine modification. Residues 613-628 are compositionally biased toward gly residues; sequence ASGGAKHGSGGFGDEC.

As to quaternary structure, homodimer. Interacts with ITGA4:ITGB1. Interacts with spectrins SPTA1 and SPTB1. Post-translationally, epinephrine-stimulated phosphorylation of Ser-621 by PKA enhances adhesion to laminin. Ser-621 can also be phosphorylated by AKT1.

It localises to the cell membrane. In terms of biological role, transmembrane glycoprotein that functions as both a receptor and an adhesion molecule playing a crucial role in cell adhesion, motility, migration and invasion. Extracellular domain enables binding to extracellular matrix proteins, such as laminin, integrin and other ligands while its intracellular domain interacts with cytoskeletal proteins like hemoglobin, facilitating cell signal transduction. Serves as a receptor for laminin alpha-5/LAMA5 to promote cell adhesion. Mechanistically, JAK2 induces BCAM phosphorylation and activates its adhesion to laminin by stimulating a Rap1/AKT signaling pathway in the absence of EPOR. The polypeptide is Basal cell adhesion molecule (BCAM) (Bos taurus (Bovine)).